The following is a 535-amino-acid chain: Dual specificity mitogen-activated protein kinase kinase 7 (535 aa).

A2 carries the N-acetylalanine modification. Residues 2-30 (AASSLEQKLSRLEAKLKQENREARRRIDL) adopt a coiled-coil conformation. The segment at 37–73 (QRPRPIIVITLSPAPAPSQRAALQLPLANDGGSRSPS) is d domain. Residues 63 to 93 (LANDGGSRSPSSESSPQHPTPPTRPRHMLGL) are disordered. A compositionally biased stretch (low complexity) spans 69–79 (SRSPSSESSPQ). In terms of domain architecture, Protein kinase spans 136-396 (LENLGEMGSG…YNKLLEHSFI (261 aa)). ATP contacts are provided by residues 142 to 150 (MGSGTCGQV) and K165. The active-site Proton acceptor is D259. At S287 the chain carries Phosphoserine; by MAP3K. Phosphothreonine; by MAP3K is present on T291. The DVD domain stretch occupies residues 393–416 (HSFIKHYEILEVDVASWFKDVMAK). Position 427 is a phosphoserine (S427).

It belongs to the protein kinase superfamily. STE Ser/Thr protein kinase family. MAP kinase kinase subfamily. In terms of assembly, interacts with RASSF7, the interaction promotes phosphorylation. Interacts with VRK2. Interacts (via its D domain) with its substrates MAPK8/JNK1, MAPK9/JNK2 and MAPK10/JNK3. Interacts (via its DVD domain) with MAP3Ks activators like MAP3K5/ASK1 and MAP3K1/MEKK1. Interacts with SH3RF1, MAPK8IP1/JIP1, MAPK8IP2/JIP2 and MAPK8IP3/JIP3 scaffold proteins. Found in a complex with SH3RF1, RAC1, MAP3K11/MLK3, MAPK8IP1/JIP1 and MAPK8/JNK1. Found in a complex with SH3RF1, RAC2, MAP3K7/TAK1, MAPK8IP1/JIP1, MAPK8/JNK1 and MAPK9/JNK2. The cofactor is Mg(2+). In terms of processing, activated by phosphorylation on Ser-287 and Thr-291 by MAP kinase kinase kinases (MAP3Ks). Expressed at high levels in brain, lung, liver, skeletal muscle, kidney, and testis and at lower levels in the heart and spleen.

It localises to the nucleus. It is found in the cytoplasm. It catalyses the reaction L-seryl-[protein] + ATP = O-phospho-L-seryl-[protein] + ADP + H(+). It carries out the reaction L-threonyl-[protein] + ATP = O-phospho-L-threonyl-[protein] + ADP + H(+). The catalysed reaction is L-tyrosyl-[protein] + ATP = O-phospho-L-tyrosyl-[protein] + ADP + H(+). Activated by phosphorylation by specific MAP kinase kinase kinases such as MAP3K1/MEKK1, MAP3K3/MEKK3, MAP3K11/MLK3 and MAP3K12/DLK. Isoforms 3 and 4 have lower basal activity but a higher level of inducible activation, than isoforms 2, 6, 7 and 8. Functionally, dual specificity protein kinase which acts as an essential component of the MAP kinase signal transduction pathway. Essential component of the stress-activated protein kinase/c-Jun N-terminal kinase (SAP/JNK) signaling pathway. With MAP2K4/MKK4, is the one of the only known kinase to directly activate the stress-activated protein kinase/c-Jun N-terminal kinases MAPK8/JNK1, MAPK9/JNK2 and MAPK10/JNK3. MAP2K4/MKK4 and MAP2K7/MKK7 both activate the JNKs by phosphorylation, but they differ in their preference for the phosphorylation site in the Thr-Pro-Tyr motif. MAP2K4/MKK4 shows preference for phosphorylation of the Tyr residue and MAP2K7/MKK7 for the Thr residue. The monophosphorylation of JNKs on the Thr residue is sufficient to increase JNK activity indicating that MAP2K7/MKK7 is important to trigger JNK activity, while the additional phosphorylation of the Tyr residue by MAP2K4/MKK4 ensures optimal JNK activation. Has a specific role in JNK signal transduction pathway activated by pro-inflammatory cytokines. The MKK/JNK signaling pathway is also involved in mitochondrial death signaling pathway, including the release cytochrome c, leading to apoptosis. Part of a non-canonical MAPK signaling pathway, composed of the upstream MAP3K12 kinase and downstream MAP kinases MAPK1/ERK2 and MAPK3/ERK1, that enhances the AP-1-mediated transcription of APP in response to APOE. The protein is Dual specificity mitogen-activated protein kinase kinase 7 of Mus musculus (Mouse).